The chain runs to 42 residues: Photosystem I reaction center subunit IX (42 aa).

The chain crosses the membrane as a helical span at residues 8–28 (YLSTIPVVGAIWLTFTAGFII).

This sequence belongs to the PsaJ family.

It localises to the plastid. The protein localises to the chloroplast thylakoid membrane. Functionally, may help in the organization of the PsaE and PsaF subunits. This chain is Photosystem I reaction center subunit IX, found in Gracilaria tenuistipitata var. liui (Red alga).